We begin with the raw amino-acid sequence, 560 residues long: Arginine--tRNA ligase (560 aa).

The short motif at 121 to 131 (PNIAKPFSMGH) is the 'HIGH' region element.

It belongs to the class-I aminoacyl-tRNA synthetase family. In terms of assembly, monomer.

It is found in the cytoplasm. The enzyme catalyses tRNA(Arg) + L-arginine + ATP = L-arginyl-tRNA(Arg) + AMP + diphosphate. This Exiguobacterium sp. (strain ATCC BAA-1283 / AT1b) protein is Arginine--tRNA ligase.